The chain runs to 397 residues: Phosphoglycerate kinase (397 aa).

Substrate contacts are provided by residues 22–24 (DLN), R37, 60–63 (HFGR), R119, and R152. Residues K202, E324, and 354–357 (GGDT) each bind ATP.

It belongs to the phosphoglycerate kinase family. Monomer.

Its subcellular location is the cytoplasm. The catalysed reaction is (2R)-3-phosphoglycerate + ATP = (2R)-3-phospho-glyceroyl phosphate + ADP. It functions in the pathway carbohydrate degradation; glycolysis; pyruvate from D-glyceraldehyde 3-phosphate: step 2/5. This is Phosphoglycerate kinase from Rhizorhabdus wittichii (strain DSM 6014 / CCUG 31198 / JCM 15750 / NBRC 105917 / EY 4224 / RW1) (Sphingomonas wittichii).